The sequence spans 252 residues: Small ribosomal subunit protein uS2 (252 aa).

The residue at position 2 (serine 2) is an N-acetylserine. Residues glutamine 213–alanine 222 are compositionally biased toward low complexity. The interval glutamine 213–tryptophan 252 is disordered. Over residues threonine 223–tryptophan 252 the composition is skewed to acidic residues.

The protein belongs to the universal ribosomal protein uS2 family. Component of the small ribosomal subunit. Mature ribosomes consist of a small (40S) and a large (60S) subunit. The 40S subunit contains about 33 different proteins and 1 molecule of RNA (18S). The 60S subunit contains about 49 different proteins and 3 molecules of RNA (25S, 5.8S and 5S). Interacts with RPS21.

It localises to the cytoplasm. Required for the assembly and/or stability of the 40S ribosomal subunit. Required for the processing of the 20S rRNA-precursor to mature 18S rRNA in a late step of the maturation of 40S ribosomal subunits. The polypeptide is Small ribosomal subunit protein uS2 (Zygosaccharomyces rouxii (strain ATCC 2623 / CBS 732 / NBRC 1130 / NCYC 568 / NRRL Y-229)).